We begin with the raw amino-acid sequence, 326 residues long: Deoxyuridine 5'-triphosphate nucleotidohydrolase (326 aa).

Substrate is bound by residues 218–220 (RSS) and 321–322 (FG).

The protein belongs to the dUTPase family. Requires Mg(2+) as cofactor.

The catalysed reaction is dUTP + H2O = dUMP + diphosphate + H(+). Involved in nucleotide metabolism: produces dUMP, the immediate precursor of thymidine nucleotides and decreases the intracellular concentration of dUTP to avoid uracil incorporation into viral DNA. In Equus caballus (Horse), this protein is Deoxyuridine 5'-triphosphate nucleotidohydrolase.